A 500-amino-acid chain; its full sequence is NAD(P)H-quinone oxidoreductase chain 4, chloroplastic (500 aa).

Transmembrane regions (helical) follow at residues 4-24 (FPWL…IFFF), 35-55 (YTIC…CYHF), 87-107 (IGPV…AWPV), 113-130 (LFHF…GSFS), 134-154 (LLLF…LLSM), 167-187 (FILY…GMGL), 208-228 (ALEI…LPII), 242-262 (HYST…YGLV), 272-292 (AHSI…IYAA), 305-325 (IAYS…SITD), 330-350 (GAIL…FLAG), 386-406 (LALP…GIIT), 416-436 (ILIT…SLSM), and 463-483 (FVSI…DFVF).

It belongs to the complex I subunit 4 family.

Its subcellular location is the plastid. It localises to the chloroplast thylakoid membrane. It carries out the reaction a plastoquinone + NADH + (n+1) H(+)(in) = a plastoquinol + NAD(+) + n H(+)(out). The catalysed reaction is a plastoquinone + NADPH + (n+1) H(+)(in) = a plastoquinol + NADP(+) + n H(+)(out). This chain is NAD(P)H-quinone oxidoreductase chain 4, chloroplastic, found in Nandina domestica (Heavenly bamboo).